The chain runs to 95 residues: FXYD domain-containing ion transport regulator 6 (95 aa).

The N-terminal stretch at 1 to 18 (MELVLVFLCSLLAPMVLA) is a signal peptide. Residues 19-35 (SAAEKEKEMDPFHYDYQ) lie on the Extracellular side of the membrane. The chain crosses the membrane as a helical span at residues 36-57 (TLRIGGLVFAVVLFSVGILLIL). Over 58–95 (SRRCKCSFNQKPRAPGDEEAQVENLITANATEPQKAEN) the chain is Cytoplasmic. Residues 69–95 (PRAPGDEEAQVENLITANATEPQKAEN) form a disordered region.

The protein belongs to the FXYD family. In terms of assembly, regulatory subunit of the sodium/potassium-transporting ATPase which is composed of a catalytic alpha subunit, a non-catalytic beta subunit and an additional regulatory subunit. The regulatory subunit, a member of the FXYD protein family, modulates the enzymatic activity in a tissue- and isoform-specific way by changing affinities of the Na+/K+-ATPase toward Na(+), K(+) or ATP.

The protein localises to the cell membrane. Its function is as follows. Associates with and regulates the activity of the sodium/potassium-transporting ATPase (NKA) which catalyzes the hydrolysis of ATP coupled with the exchange of Na(+) and K(+) ions across the plasma membrane. Reduces the apparent affinity for intracellular Na(+) with no change in the apparent affinity for extracellular K(+). In addition to modulating NKA kinetics, may also function as a regulator of NKA localization to the plasma membrane. This is FXYD domain-containing ion transport regulator 6 from Homo sapiens (Human).